The primary structure comprises 337 residues: Schlafen family member 1 (337 aa).

Residues 147–166 (AGGRSPSARPSDRPGDDTQE) form a disordered region. Over residues 156-166 (PSDRPGDDTQE) the composition is skewed to basic and acidic residues.

This sequence belongs to the Schlafen family. Interacts with DNAJB6; promoting nuclear translocation and ability to promote cell-cycle arrest. As to expression, mainly expressed in the thymus, lymph node and spleen. Specifically expressed in T-lineage cells, but not in B-cells. Strongly up-regulated during the differentiation from CD4(+)CD8(+) double-positive (DP) to CD4(+) or CD8(+) single-positive (SP) thymocytes. Highly expressed in quiescent single-positive thymocytes and T-cells. The expression substantially decreases after TCR (T-cell receptor)-mediated activation.

It is found in the cytoplasm. Its subcellular location is the nucleus. Protein expressed in resting T-cells, which is required for maintaining T-cells in the quiescent state. Acts by promoting cell-cycle arrest of T-cells through inhibiting the expression of cyclin-D1 (CCND1). In Mus musculus (Mouse), this protein is Schlafen family member 1.